A 536-amino-acid chain; its full sequence is Glucan 1,6-alpha-glucosidase (536 aa).

Catalysis depends on Asp194, which acts as the Nucleophile. The active-site Proton donor is the Glu236.

Belongs to the glycosyl hydrolase 13 family.

It localises to the cytoplasm. It carries out the reaction Hydrolysis of (1-&gt;6)-alpha-D-glucosidic linkages in (1-&gt;6)-alpha-D-glucans and derived oligosaccharides.. Its function is as follows. The physiological substrates may be short isomaltosaccharides. The protein is Glucan 1,6-alpha-glucosidase (dexB) of Streptococcus mutans serotype c (strain ATCC 700610 / UA159).